Here is a 134-residue protein sequence, read N- to C-terminus: Translation initiation factor 2 subunit beta (134 aa).

This sequence belongs to the eIF-2-beta/eIF-5 family. Heterotrimer composed of an alpha, a beta and a gamma chain.

Functionally, eIF-2 functions in the early steps of protein synthesis by forming a ternary complex with GTP and initiator tRNA. This is Translation initiation factor 2 subunit beta from Pyrobaculum aerophilum (strain ATCC 51768 / DSM 7523 / JCM 9630 / CIP 104966 / NBRC 100827 / IM2).